Consider the following 214-residue polypeptide: U3 small nucleolar RNA-associated protein 16 (214 aa).

Residues 1 to 10 show a composition bias toward basic and acidic residues; it reads MSNGHVKFDA. Residues 1-106 form a disordered region; sequence MSNGHVKFDA…KSVNETEVTD (106 aa). S16 is subject to Phosphoserine. The span at 22–41 shows a compositional bias: basic and acidic residues; the sequence is DRQDDVLVISKKDKEVHSSS. A compositionally biased stretch (acidic residues) spans 42–52; the sequence is DEESDDDDAPQ. 3 positions are modified to phosphoserine: S45, S65, and S144. Residues 54–75 show a composition bias toward basic and acidic residues; the sequence is EGLHSGKSEVESQITQREEAIR. The segment at 182–214 is disordered; it reads STTQDSKTLPPKKESSIIRSKDRWLNRKALNKG. A compositionally biased stretch (basic and acidic residues) spans 192–206; the sequence is PKKESSIIRSKDRWL.

Belongs to the UTP16 family. As to quaternary structure, part of the small subunit (SSU) processome composed of at least 40 protein subunits and the RNA chaperone small nucleolar RNA (snoRNA) U3. Interacts with snoRNA U3. Interacts with MPP10.

Its subcellular location is the nucleus. The protein resides in the nucleolus. Functions as part of the small subunit (SSU) processome, first precursor of the small eukaryotic ribosomal subunit that coordinates the first two steps of ribosome biogenesis in transcription of the primary transcript pre-RNA and pre-18S processing. During the assembly of the SSU processome in the nucleolus, many ribosome biogenesis factors, an RNA chaperone and ribosomal proteins associate with the nascent pre-rRNA and work in concert to generate RNA folding, modifications, rearrangements and cleavage as well as targeted degradation of pre-ribosomal RNA by the RNA exosome. Has a role in bud site selection maybe via the regulation of expression of bipolar budding components. This chain is U3 small nucleolar RNA-associated protein 16 (BUD21), found in Saccharomyces cerevisiae (strain ATCC 204508 / S288c) (Baker's yeast).